Consider the following 254-residue polypeptide: Alcohol dehydrogenase 2 (254 aa).

Position 10 to 33 (10 to 33) interacts with NAD(+); that stretch reads FVAGLGGIGLDTSREIVKSGPKNL. S138 lines the substrate pocket. The Proton acceptor role is filled by Y151.

It belongs to the short-chain dehydrogenases/reductases (SDR) family. Homodimer.

It carries out the reaction a primary alcohol + NAD(+) = an aldehyde + NADH + H(+). It catalyses the reaction a secondary alcohol + NAD(+) = a ketone + NADH + H(+). The chain is Alcohol dehydrogenase 2 (Adh2) from Drosophila montana (Fruit fly).